Consider the following 470-residue polypeptide: MRIFNTLTRKKEEFIPITPGEVKMYVCGPTVYNFFHIGNGRTFIVFDTIRRYLEYRGYDVKFVQNFTDIDDKMIKKANEEGTTVKEIGDKYIKEYYEDADKLQIERATVNPRATEYIEDIIDFVAQLIEKGYAYEVEGDVYFNTKKFNDYGKLSGQSIEDLQMGASNRTSSVADERKKDPMDFAIWKSQKPGEPAWKCPWGMGRPGWHIECSCMAKKILGDTIDIHAGGMDLTFPHHENEVAQSEALTGVQFANYWMHSAYVNINNQKMSKSLNNFFTARDILKEYDSDVVRFFMMSAHYRLQINFSKDLLDSAKASVERLYNAIGNLENLIDEVSRENMNEEEVRYLNSLNKYREKYIEKMDDDFNTADALTVLFELTKDTNTNINVNSSKELVNKALDLIRELGAPLGLLQKITKGSLEDEIESLIQQRQDARKNKDFALSDKIRDDLKDRGIVLEDTPQGVRWKKIN.

Cysteine 27 provides a ligand contact to Zn(2+). The 'HIGH' region signature appears at 29 to 39 (PTVYNFFHIGN). Cysteine 211, histidine 236, and glutamate 240 together coordinate Zn(2+). A 'KMSKS' region motif is present at residues 268 to 272 (KMSKS). Position 271 (lysine 271) interacts with ATP.

This sequence belongs to the class-I aminoacyl-tRNA synthetase family. Monomer. Requires Zn(2+) as cofactor.

The protein resides in the cytoplasm. The enzyme catalyses tRNA(Cys) + L-cysteine + ATP = L-cysteinyl-tRNA(Cys) + AMP + diphosphate. The sequence is that of Cysteine--tRNA ligase from Clostridium botulinum (strain Alaska E43 / Type E3).